Here is a 308-residue protein sequence, read N- to C-terminus: Putative mitochondrial transporter UCP3 (308 aa).

Residues 1–10 lie on the Mitochondrial intermembrane side of the membrane; the sequence is MVGLKPPEVP. A helical transmembrane segment spans residues 11–32; sequence PTTAVKLLGAGTAACFADLLTF. Solcar repeat units lie at residues 11–102, 111–202, and 211–296; these read PTTA…VKQL, SSIT…IKEK, and DNLP…LKRA. Residues 33–73 lie on the Mitochondrial matrix side of the membrane; it reads PLDTAKVRLQIQGENQAARSAQYRGVLGTILTMVRNEGPRS. The helical transmembrane segment at 74-96 threads the bilayer; the sequence is PYNGLVAGLQRQMSFASIRIGLY. Over 97–116 the chain is Mitochondrial intermembrane; the sequence is DSVKQLYTPKGSDHSSITTR. A helical membrane pass occupies residues 117 to 133; that stretch reads ILAGCTTGAMAVTCAQP. Topologically, residues 134-179 are mitochondrial matrix; it reads TDVVKVRFQASIHAGPRSNRKYSGTMDAYRTIAREEGVRGLWKGIL. Residues 180-196 form a helical membrane-spanning segment; the sequence is PNITRNAIVNCAEMVTY. Residues 197–213 lie on the Mitochondrial intermembrane side of the membrane; sequence DVIKEKVLDYHLLTDNL. A helical membrane pass occupies residues 214–233; that stretch reads PCHFVSAFGAGFCATVVASP. Residues 234–267 lie on the Mitochondrial matrix side of the membrane; sequence VDVVKTRYMNSPPGQYQNPLDCMLKMVTQEGPTA. The helical transmembrane segment at 268-290 threads the bilayer; the sequence is FYKGFTPSFLRLGSWNVVMFVSY. The interval 275–297 is purine nucleotide binding; sequence SFLRLGSWNVVMFVSYEQLKRAL. At 291–308 the chain is on the mitochondrial intermembrane side; that stretch reads EQLKRALMKVQMLRESPF.

This sequence belongs to the mitochondrial carrier (TC 2.A.29) family. In terms of assembly, interacts with HAX1; the interaction is direct and calcium-dependent.

Its subcellular location is the mitochondrion inner membrane. In terms of biological role, putative transmembrane transporter that plays a role in mitochondrial metabolism via an as yet unclear mechanism. Originally, this mitochondrial protein was thought to act as a proton transmembrane transporter from the mitochondrial intermembrane space into the matrix, causing proton leaks through the inner mitochondrial membrane, thereby uncoupling mitochondrial membrane potential generation from ATP synthesis. However, this function is controversial and uncoupling may not be the function, or at least not the main function, but rather a consequence of more conventional metabolite transporter activity. The chain is Putative mitochondrial transporter UCP3 from Sus scrofa (Pig).